A 334-amino-acid chain; its full sequence is MKLSDFDYYLPEELIAQKPVEPRDASRLMVLNRKEKKIEHKIFRNIVEYLHEGDLLVRNVTKVIPARIYGRKETGAKIEVLLLEKISENVWEALVKPGSKVKKGTKIYFDDESYCVCLDWGDEGSRILEFNITEEELFKLGEAPLPPYVKNKVSFERYQTIYSRETGSVAAPTAGLHFTEDLLKKLEEKGVEFADLVLHVGLGTFRPVKVENITEHKMHSESYYVPNETVKKIFETKKNGGRIVAVGTTSVRTLETIVRLERKESYHGKTDIFIYPPFEFKLVDALITNFHLPKSTLLMLVSAFAGREFIMEAYNIAVKMKYRFFSFGNACFIY.

The protein belongs to the QueA family. In terms of assembly, monomer.

The protein localises to the cytoplasm. The catalysed reaction is 7-aminomethyl-7-carbaguanosine(34) in tRNA + S-adenosyl-L-methionine = epoxyqueuosine(34) in tRNA + adenine + L-methionine + 2 H(+). The protein operates within tRNA modification; tRNA-queuosine biosynthesis. Functionally, transfers and isomerizes the ribose moiety from AdoMet to the 7-aminomethyl group of 7-deazaguanine (preQ1-tRNA) to give epoxyqueuosine (oQ-tRNA). The protein is S-adenosylmethionine:tRNA ribosyltransferase-isomerase of Thermosipho melanesiensis (strain DSM 12029 / CIP 104789 / BI429).